A 161-amino-acid chain; its full sequence is Arachidonate 5-lipoxygenase-activating protein (161 aa).

The Lumenal segment spans residues 1–8; it reads MDQETVGN. A helical membrane pass occupies residues 9 to 30; that stretch reads VVLLAIVTLISVVQNGFFAHKV. Topologically, residues 31-52 are cytoplasmic; sequence EHESRTQNGRSFQRTGTLAFER. The chain crosses the membrane as a helical span at residues 53 to 77; sequence VYTANQNCVDAYPTFLAVLWSAGLL. Topologically, residues 78–80 are lumenal; it reads CSQ. A helical transmembrane segment spans residues 81–102; the sequence is VPAAFAGLMYLFVRQKYFVGYL. The Cytoplasmic portion of the chain corresponds to 103–107; it reads GERTQ. Residues 108-115 lie within the membrane without spanning it; that stretch reads STPGYIFG. A helical membrane pass occupies residues 116 to 128; sequence KRIILFLFLMSVA. The Lumenal segment spans residues 129–161; it reads GIFNYYLIFFFGSDFENYIKTISTTISPLLLIP.

The protein belongs to the MAPEG family. In terms of assembly, homotrimer. Interacts with LTC4S and ALOX5.

The protein localises to the nucleus membrane. It localises to the endoplasmic reticulum membrane. Its function is as follows. Required for leukotriene biosynthesis by ALOX5 (5-lipoxygenase). Anchors ALOX5 to the membrane. Binds arachidonic acid, and could play an essential role in the transfer of arachidonic acid to ALOX5. Binds to MK-886, a compound that blocks the biosynthesis of leukotrienes. In Homo sapiens (Human), this protein is Arachidonate 5-lipoxygenase-activating protein (ALOX5AP).